A 640-amino-acid chain; its full sequence is Threonine--tRNA ligase (640 aa).

Positions 1 to 61 (MPTITLPDGS…ENDASLQIIT (61 aa)) constitute a TGS domain. Residues 242–533 (DHRKIGKRLG…LIEHYEGAFP (292 aa)) are catalytic. Cys-333, His-384, and His-510 together coordinate Zn(2+).

Belongs to the class-II aminoacyl-tRNA synthetase family. In terms of assembly, homodimer. Zn(2+) is required as a cofactor.

The protein resides in the cytoplasm. It catalyses the reaction tRNA(Thr) + L-threonine + ATP = L-threonyl-tRNA(Thr) + AMP + diphosphate + H(+). Its function is as follows. Catalyzes the attachment of threonine to tRNA(Thr) in a two-step reaction: L-threonine is first activated by ATP to form Thr-AMP and then transferred to the acceptor end of tRNA(Thr). Also edits incorrectly charged L-seryl-tRNA(Thr). In Pseudomonas savastanoi pv. phaseolicola (strain 1448A / Race 6) (Pseudomonas syringae pv. phaseolicola (strain 1448A / Race 6)), this protein is Threonine--tRNA ligase.